A 288-amino-acid polypeptide reads, in one-letter code: HTH-type transcriptional regulator CzcR (288 aa).

The 58-residue stretch at 1–58 (MELRDLQIFQSVADQGSVSSAAKELNYVQSNVTARIKQLENELKTPLFYRHKRGMTLT) folds into the HTH lysR-type domain. Residues 18-37 (VSSAAKELNYVQSNVTARIK) constitute a DNA-binding region (H-T-H motif).

It belongs to the LysR transcriptional regulatory family.

The chain is HTH-type transcriptional regulator CzcR (czcR) from Bacillus anthracis.